The sequence spans 226 residues: Transcriptional activator plp-1 (226 aa).

Belongs to the PUR DNA-binding protein family.

It localises to the nucleus. It is found in the chromosome. Functionally, probable transcription activator. Binds telomeric DNA containing repeats of the sequence, 5'-TTAGGC-3'. Binds to end-1 promoter, activating end-1 expression, which is required for endoderm specification during embryonic development. The protein is Transcriptional activator plp-1 of Caenorhabditis elegans.